Consider the following 92-residue polypeptide: Small ribosomal subunit protein bS21 (92 aa).

A disordered region spans residues 37 to 92 (QREGTFREMKRRNHYEKPSEKKARQKAEAIRRARKLARKRAQREGLIAKRGGTTRR). Positions 51–67 (YEKPSEKKARQKAEAIR) are enriched in basic and acidic residues. The span at 68–77 (RARKLARKRA) shows a compositional bias: basic residues.

The protein belongs to the bacterial ribosomal protein bS21 family.

This is Small ribosomal subunit protein bS21 from Maricaulis maris (strain MCS10) (Caulobacter maris).